The following is a 220-amino-acid chain: Guanylate kinase (220 aa).

The Guanylate kinase-like domain maps to 15–194; it reads GLMLVISSPS…ALDAVQSIVK (180 aa). ATP is bound at residue 22–29; that stretch reads SPSGAGKS.

It belongs to the guanylate kinase family.

It is found in the cytoplasm. It catalyses the reaction GMP + ATP = GDP + ADP. Essential for recycling GMP and indirectly, cGMP. The chain is Guanylate kinase from Rhizobium johnstonii (strain DSM 114642 / LMG 32736 / 3841) (Rhizobium leguminosarum bv. viciae).